The sequence spans 196 residues: Protein Flattop (196 aa).

The interval 107–196 (NGLRPEIFGK…PHAGRNLAEV (90 aa)) is disordered. Over residues 113–124 (IFGKPHDPDSQK) the composition is skewed to basic and acidic residues. Over residues 137–149 (APSPTIIPSSPAS) the composition is skewed to low complexity. Residues 150–162 (NLSSPDQLQSSHP) are compositionally biased toward polar residues.

The protein belongs to the Flattop family. As to quaternary structure, microtubule inner protein component of sperm flagellar doublet microtubules. Interacts with DLG3. As to expression, expressed in trachea multiciliated cells.

It is found in the cytoplasm. The protein resides in the cytoskeleton. The protein localises to the cilium basal body. It localises to the cell projection. Its subcellular location is the cilium. It is found in the apical cell membrane. The protein resides in the cilium axoneme. The protein localises to the flagellum axoneme. Microtubule inner protein (MIP) part of the dynein-decorated doublet microtubules (DMTs) in cilia axoneme. Acts as a regulator of cilium basal body docking and positioning in mono- and multiciliated cells. Regulates basal body docking and cilia formation in multiciliated lung cells. Regulates kinocilium positioning and stereocilia bundle morphogenesis in the inner ear. This chain is Protein Flattop, found in Bos taurus (Bovine).